The following is a 290-amino-acid chain: UPF0750 membrane protein YpjC (290 aa).

Helical transmembrane passes span 9–29 (NIFF…HFNM), 47–67 (ALFH…IFFI), 75–95 (TMFV…SIFQ), 106–126 (DLAL…GIIF), 146–166 (FGIP…ILSL), and 179–199 (LVAV…GYAA).

Belongs to the UPF0750 family.

It is found in the cell membrane. This is UPF0750 membrane protein YpjC (ypjC) from Bacillus subtilis (strain 168).